A 440-amino-acid polypeptide reads, in one-letter code: MGEKPTIAISHLGCEKNRIDTEHMLGLLVKAGYGVDTNEELADYVIVNTCSFIESAREESVRTLVELAEANKKIVITGCMAQHFQTQLLEELPEAVAVVGTGDYHKIVSVIERAEQGERVTLVSAEPTYIADETTPRYRTTTEGVAYLRVAEGCDYRCAFCIIPHLRGNQRSRTIESIVAEAEQLVAQGVQEIILISQITTNYGLDIYGKPKLAELLRALGKINVPWIRMHYAYPTGLTPDVIAAIQETPNVLPYLDLPLQHSHSEVLRSMNRPWQGRVNDEIIERLKIAIPGAVLRTTFIVGFPGETEAQFEHLLQFVQRHEFDHVGVFTFSAEEGTPAYKLPNQLPQEVMDERRDRLMALQQPISWRKNQQEVGKTVEVLIEQENPESGKLIGRSGRFSPEVDGQVYVDGEAKLGTIIPVKIHSADEYDLFGQVVSHN.

The MTTase N-terminal domain maps to 5–116; sequence PTIAISHLGC…IVSVIERAEQ (112 aa). Positions 14, 50, 79, 154, 158, and 161 each coordinate [4Fe-4S] cluster. Residues 140 to 370 form the Radical SAM core domain; that stretch reads TTTEGVAYLR…ALQQPISWRK (231 aa). The TRAM domain maps to 372–438; that stretch reads QQEVGKTVEV…EYDLFGQVVS (67 aa).

It belongs to the methylthiotransferase family. RimO subfamily. [4Fe-4S] cluster serves as cofactor.

The protein localises to the cytoplasm. It catalyses the reaction L-aspartate(89)-[ribosomal protein uS12]-hydrogen + (sulfur carrier)-SH + AH2 + 2 S-adenosyl-L-methionine = 3-methylsulfanyl-L-aspartate(89)-[ribosomal protein uS12]-hydrogen + (sulfur carrier)-H + 5'-deoxyadenosine + L-methionine + A + S-adenosyl-L-homocysteine + 2 H(+). Catalyzes the methylthiolation of an aspartic acid residue of ribosomal protein uS12. This Nostoc sp. (strain PCC 7120 / SAG 25.82 / UTEX 2576) protein is Ribosomal protein uS12 methylthiotransferase RimO.